We begin with the raw amino-acid sequence, 369 residues long: 3 beta-hydroxysteroid dehydrogenase type 7 (369 aa).

The active-site Proton acceptor is the tyrosine 159. Lysine 163 is an NAD(+) binding site. Helical transmembrane passes span 289-309 (LLPYWLLVLLATLNALLQWLL) and 312-334 (LVLYTPLLNPYTLAMANTTFTVS).

The protein belongs to the 3-beta-HSD family. In terms of tissue distribution, predominantly expressed in liver.

The protein resides in the endoplasmic reticulum membrane. It carries out the reaction 7alpha-hydroxycholesterol + NAD(+) = 7alpha-hydroxycholest-4-en-3-one + NADH + H(+). The enzyme catalyses 7alpha,25-dihydroxycholesterol + NAD(+) = 7alpha,25-dihydroxy-4-cholesten-3-one + NADH + H(+). The catalysed reaction is (25R)-cholest-5-en-3beta,7alpha,26-triol + NAD(+) = (25R)-7alpha,26-dihydroxycholest-4-en-3-one + NADH + H(+). It catalyses the reaction (24S)-7alpha-dihydroxycholesterol + NAD(+) = (24S)-7alpha,24-dihydroxycholest-4-en-3-one + NADH + H(+). It functions in the pathway lipid metabolism; steroid biosynthesis. Its function is as follows. The 3-beta-HSD enzymatic system plays a crucial role in the biosynthesis of all classes of hormonal steroids. HSD VII is active against four 7-alpha-hydroxylated sterols. Does not metabolize several different C(19/21) steroids as substrates. Involved in bile acid synthesis. Plays a key role in cell positioning and movement in lymphoid tissues by mediating degradation of 7-alpha,25-dihydroxycholesterol (7-alpha,25-OHC): 7-alpha,25-OHC acts as a ligand for the G protein-coupled receptor GPR183/EBI2, a chemotactic receptor for a number of lymphoid cells. In Mus musculus (Mouse), this protein is 3 beta-hydroxysteroid dehydrogenase type 7.